A 223-amino-acid polypeptide reads, in one-letter code: UPF0758 protein HD_0732 (223 aa).

In terms of domain architecture, MPN spans 98–220 (TINTPHLAIM…YFSFEEERFH (123 aa)). His-169, His-171, and Asp-182 together coordinate Zn(2+). Residues 169–182 (HNHPSGNCTASQAD) carry the JAMM motif motif.

Belongs to the UPF0758 family.

This chain is UPF0758 protein HD_0732, found in Haemophilus ducreyi (strain 35000HP / ATCC 700724).